An 83-amino-acid chain; its full sequence is Conotoxin Pu6.1 (83 aa).

A signal peptide spans 1–19; it reads MKLVLAIVLILMLVSLSTG. Residues 20 to 42 constitute a propeptide that is removed on maturation; it reads AEESGQEISMVGPPLYIWDPIPP. Disulfide bonds link Cys-43–Cys-57, Cys-50–Cys-62, and Cys-56–Cys-78.

It belongs to the conotoxin I3 superfamily. In terms of tissue distribution, expressed by the venom duct.

It localises to the secreted. This chain is Conotoxin Pu6.1, found in Conus pulicarius (Flea-bitten cone).